The sequence spans 234 residues: Ribose-5-phosphate isomerase A (234 aa).

Substrate is bound by residues 28–31, 85–88, and 98–101; these read TGST, DGAD, and KGLG. Residue Glu107 is the Proton acceptor of the active site. Lys125 is a binding site for substrate.

The protein belongs to the ribose 5-phosphate isomerase family. In terms of assembly, homodimer.

The enzyme catalyses aldehydo-D-ribose 5-phosphate = D-ribulose 5-phosphate. Its pathway is carbohydrate degradation; pentose phosphate pathway; D-ribose 5-phosphate from D-ribulose 5-phosphate (non-oxidative stage): step 1/1. Its function is as follows. Catalyzes the reversible conversion of ribose-5-phosphate to ribulose 5-phosphate. This chain is Ribose-5-phosphate isomerase A, found in Roseiflexus castenholzii (strain DSM 13941 / HLO8).